The primary structure comprises 297 residues: Large ribosomal subunit protein uL18 (297 aa).

At G2 the chain carries N-acetylglycine. 2 positions are modified to N6-acetyllysine: K5 and K48. S185 carries the post-translational modification Phosphoserine. The residue at position 220 (K220) is an N6-acetyllysine; alternate. K220 is covalently cross-linked (Glycyl lysine isopeptide (Lys-Gly) (interchain with G-Cter in SUMO1); alternate). K220 is covalently cross-linked (Glycyl lysine isopeptide (Lys-Gly) (interchain with G-Cter in SUMO2); alternate). T232 carries the phosphothreonine modification. Residues 253-297 (YEKKPKREVKKKRWNRPKMSLAQKKDRVAQKKASFLRAQERAAES) form a disordered region. A compositionally biased stretch (basic residues) spans 258–268 (KREVKKKRWNR). A Phosphoserine modification is found at S272.

Belongs to the universal ribosomal protein uL18 family. Component of the large ribosomal subunit (LSU). Part of the 5S RNP complex, which is a LSU subcomplex composed of the 5S RNA, RPL5 and RPL11. Component of a hexameric 5S RNP precursor complex, composed of 5S RNA, RRS1, RPF2/BXDC1, RPL5, RPL11 and HEATR3; this complex acts as a precursor for ribosome assembly. Interacts with NVL in an ATP-dependent manner. Interacts with RRP1B. Interacts with IPO5, IPO7 and KPNB1; these interactions may be involved in RPL5 nuclear import for the assembly of ribosomal subunits.

The protein localises to the cytoplasm. It is found in the nucleus. The protein resides in the nucleolus. Functionally, component of the ribosome, a large ribonucleoprotein complex responsible for the synthesis of proteins in the cell. The small ribosomal subunit (SSU) binds messenger RNAs (mRNAs) and translates the encoded message by selecting cognate aminoacyl-transfer RNA (tRNA) molecules. The large subunit (LSU) contains the ribosomal catalytic site termed the peptidyl transferase center (PTC), which catalyzes the formation of peptide bonds, thereby polymerizing the amino acids delivered by tRNAs into a polypeptide chain. The nascent polypeptides leave the ribosome through a tunnel in the LSU and interact with protein factors that function in enzymatic processing, targeting, and the membrane insertion of nascent chains at the exit of the ribosomal tunnel. As part of the 5S RNP/5S ribonucleoprotein particle it is an essential component of the LSU, required for its formation and the maturation of rRNAs. It also couples ribosome biogenesis to p53/TP53 activation. As part of the 5S RNP it accumulates in the nucleoplasm and inhibits MDM2, when ribosome biogenesis is perturbed, mediating the stabilization and the activation of TP53. This chain is Large ribosomal subunit protein uL18 (Rpl5), found in Mus musculus (Mouse).